The primary structure comprises 801 residues: Heavy metal tolerance factor 1 (801 aa).

At 1–24 (MGFSPFLDECRAEGLWPIGPSCNK) the chain is on the lumenal side. The chain crosses the membrane as a helical span at residues 25 to 45 (IISFGVYTFFIVVNFIVLCIP). At 46–75 (NSNSANNNYRRMTDDDASSTSKLTISKILS) the chain is on the cytoplasmic side. The helical transmembrane segment at 76-96 (ICTIFAVICQSIFYFCFTFYF) threads the bilayer. The Lumenal segment spans residues 97–101 (HPYTH). Residues 102 to 122 (LLLAFCVSKLFFWILSLCSFS) traverse the membrane as a helical segment. At 123 to 129 (KWRNQPS) the chain is on the cytoplasmic side. Residues 130–150 (TPISLAFAFSAALLIHCIPLT) form a helical membrane-spanning segment. Residues 151-167 (DWKKYFEPTSKNRGDLT) lie on the Lumenal side of the membrane. Residues 168-188 (FYIIELALVTVVFFFTIVTGL) form a helical membrane-spanning segment. Residues 189 to 226 (FNFSGCSSRESAWNNLSKKVVTVAPYIWPTKSISLQLR) are Cytoplasmic-facing. A helical membrane pass occupies residues 227-247 (VVFCLFLLIIGRLINVSLPIL). The ABC transmembrane type-1 domain maps to 227-516 (VVFCLFLLII…FGTIYRVIQK (290 aa)). Topologically, residues 248-264 (SKWIVDELATPDTFQYS) are lumenal. Residues 265 to 285 (LLFLATFLKFLQGNGAMGGFL) form a helical membrane-spanning segment. At 286–341 (NTVRTYLWIPIQQYTTRELEVELFKHLHSLSLRWHLSRKTGQVLRVMDRGTSSVNN) the chain is on the cytoplasmic side. Residues 342 to 364 (ILNYILFNVVPTIADIVIAVIFF) traverse the membrane as a helical segment. Residues 365–371 (FSAFNAY) lie on the Lumenal side of the membrane. The chain crosses the membrane as a helical span at residues 372–390 (FGLIVFGTMALYLTVTISI). Residues 391–461 (TEWRTQYIRE…SLAFLNCLQN (71 aa)) are Cytoplasmic-facing. The helical transmembrane segment at 462-482 (AIIGIGMIGGSVFVVYMIVHE) threads the bilayer. Topologically, residues 483 to 489 (KTLTVGD) are lumenal. Residues 490–510 (YVLFTTYLLQLYTPLNFFGTI) form a helical membrane-spanning segment. At 511 to 801 (YRVIQKAFVD…KSIELGEELP (291 aa)) the chain is on the cytoplasmic side. The 235-residue stretch at 550–784 (ISVKNLTFEY…QGTYASMWEA (235 aa)) folds into the ABC transporter domain. 583-590 (GSSGSGKS) provides a ligand contact to ATP.

Belongs to the ABC transporter superfamily. ABCB family. Heavy Metal importer (TC 3.A.1.210) subfamily. Expressed in coelomocytes, as well as in head and tail neurons, and in the intestinal cells.

The protein localises to the vacuole membrane. It localises to the early endosome. The protein resides in the late endosome. It is found in the recycling endosome. Functionally, may play a pivotal role in the detoxification of heavy metals such as cadmium but do not depend exclusively on phytochelatins (PC) synthesis. This chain is Heavy metal tolerance factor 1, found in Caenorhabditis elegans.